The following is a 367-amino-acid chain: Peptide chain release factor 2 (367 aa).

Glutamine 250 carries the post-translational modification N5-methylglutamine.

Belongs to the prokaryotic/mitochondrial release factor family. Methylated by PrmC. Methylation increases the termination efficiency of RF2.

It localises to the cytoplasm. Functionally, peptide chain release factor 2 directs the termination of translation in response to the peptide chain termination codons UGA and UAA. The polypeptide is Peptide chain release factor 2 (Mycobacteroides abscessus (strain ATCC 19977 / DSM 44196 / CCUG 20993 / CIP 104536 / JCM 13569 / NCTC 13031 / TMC 1543 / L948) (Mycobacterium abscessus)).